The sequence spans 247 residues: Transmembrane protein 33 (247 aa).

Ala-2 is modified (N-acetylalanine). Over 2 to 31 (ADTTPNGPQGAGAVQFMMTNKLDTAMWLSR) the chain is Lumenal. The helical transmembrane segment at 32–52 (LFTVYCSALFVLPLLGLHEAA) threads the bilayer. Topologically, residues 53-100 (SFYQRALLANALTSALRLHQRLPHFQLSRAFLAQALLEDSCHYLLYSL) are cytoplasmic. The helical transmembrane segment at 101–121 (IFVNSYPVTMSIFPVLLFSLL) threads the bilayer. The Lumenal segment spans residues 122–155 (HAATYTKKVLDARGSNSLPLLRSVLDKLSANQQN). A helical membrane pass occupies residues 156 to 176 (ILKFIACNEIFLMPATVFMLF). Over 177–247 (SGQGSLLQPF…FISRLAPTVP (71 aa)) the chain is Cytoplasmic.

The protein belongs to the PER33/POM33 family. Interacts with EIF2AK3. Interacts with ARL6IP1, isoform RTN1-A of RTN1, isoform RTN2-B of RTN2, isoform 3 of RTN3 and isoform 3 of RTN4. Interacts with RNF5. Interacts with RNF26. Interacts with PKD2. As to expression, prostate cancer and several cancer cell lines (at protein level). Widely expressed. Expressed at higher levels in endocrine-resistant breast cancer cells as compared to endocrine-sensitive breast cancer cells. Expressed at higher levels in early recurrence breast cancer tissues as compared to non-recurrent breast tumors.

The protein resides in the endoplasmic reticulum membrane. Its subcellular location is the melanosome. It is found in the nucleus envelope. Acts as a regulator of the tubular endoplasmic reticulum (ER) network by modulating intracellular calcium homeostasis. Mechanistically, stimulates PKD2 calcium-dependent activity. Suppresses the RTN3/4-induced formation of the ER tubules. Positively regulates PERK-mediated and IRE1-mediated unfolded protein response signaling. Plays an essential role in VEGF-mediated release of Ca(2+) from ER stores during angiogenesis. Also plays a role in the modulation of innate immune signaling through the cGAS-STING pathway by interacting with RNF26. Participates in lipid metabolism by acting as a downstream effector of the pyruvate kinase/PKM. Forms a complex with RNF5 to facilitate polyubiquitination and subsequent degradation of SCAP on the ER membrane. The polypeptide is Transmembrane protein 33 (TMEM33) (Homo sapiens (Human)).